A 403-amino-acid chain; its full sequence is Methylthioribose-1-phosphate isomerase (403 aa).

Residue Asp-280 is the Proton donor of the active site.

It belongs to the eIF-2B alpha/beta/delta subunits family. MtnA subfamily.

The protein localises to the cytoplasm. Its subcellular location is the nucleus. It catalyses the reaction 5-(methylsulfanyl)-alpha-D-ribose 1-phosphate = 5-(methylsulfanyl)-D-ribulose 1-phosphate. The protein operates within amino-acid biosynthesis; L-methionine biosynthesis via salvage pathway; L-methionine from S-methyl-5-thio-alpha-D-ribose 1-phosphate: step 1/6. Catalyzes the interconversion of methylthioribose-1-phosphate (MTR-1-P) into methylthioribulose-1-phosphate (MTRu-1-P). In Eremothecium gossypii (strain ATCC 10895 / CBS 109.51 / FGSC 9923 / NRRL Y-1056) (Yeast), this protein is Methylthioribose-1-phosphate isomerase.